Consider the following 376-residue polypeptide: MNDVLDLTCDLIARASVTPEDAGCQALLAGRLTAAGFACEHLRLGEVDNLWATHGSGAPVLVLLGHTDVVPPGPREAWTSDPFDPQIRDGVLYGRGVADMKGSVAAFVVAAEQFVAAHRAHAGTLAVLLTSDEEGDAIDGVRRVANLFRERGQAIDWCITGEPSSTERLGDLLRVGRRGSLSGTLTVKGVQGHVAYPHKARNPIHLAAPALAELVARQWDDGFESFPPTSLQVSNIHAGTGANNVIPGELQVAFNLRYTPHWDAPRLETEITALLDRHALDYALRWHRSGEPFYTPEGRLRSVAREVLGAFAGAPPEESTGGGTSDARFIAPLGAQCIEVGPVNASIHQVDEHVRVADLQALPALYRTLIERLLVE.

Residue histidine 66 participates in Zn(2+) binding. Aspartate 68 is a catalytic residue. Aspartate 99 is a binding site for Zn(2+). Residue glutamate 133 is the Proton acceptor of the active site. Zn(2+) is bound by residues glutamate 134, glutamate 162, and histidine 348.

This sequence belongs to the peptidase M20A family. DapE subfamily. Homodimer. Zn(2+) serves as cofactor. Co(2+) is required as a cofactor.

It carries out the reaction N-succinyl-(2S,6S)-2,6-diaminopimelate + H2O = (2S,6S)-2,6-diaminopimelate + succinate. It participates in amino-acid biosynthesis; L-lysine biosynthesis via DAP pathway; LL-2,6-diaminopimelate from (S)-tetrahydrodipicolinate (succinylase route): step 3/3. In terms of biological role, catalyzes the hydrolysis of N-succinyl-L,L-diaminopimelic acid (SDAP), forming succinate and LL-2,6-diaminopimelate (DAP), an intermediate involved in the bacterial biosynthesis of lysine and meso-diaminopimelic acid, an essential component of bacterial cell walls. This is Succinyl-diaminopimelate desuccinylase from Xanthomonas oryzae pv. oryzae (strain PXO99A).